The chain runs to 68 residues: MKLCVVXVLLMLAMPFNGGEASRFFNQHARSQRSGMKTRGIWCDPPCPEGETCRGGECSDEFNGDLGG.

The N-terminal stretch at Met1–Glu20 is a signal peptide. A propeptide spanning residues Ala21–Gly68 is cleaved from the precursor. Leu66 carries the post-translational modification Leucine amide.

Post-translationally, contains 2 disulfide bonds. Expressed by the venom duct.

It localises to the secreted. Probable neurotoxin with unknown target. Possibly targets ion channels. The polypeptide is Conotoxin Cal14.13c (Californiconus californicus (California cone)).